The chain runs to 358 residues: Reverse gyrase subunit A (358 aa).

Residues 1–351 (MNATLRIRNR…KLYLELERVV (351 aa)) form the Topo IA-type catalytic domain. Catalysis depends on Tyr78, which acts as the O-(5'-phospho-DNA)-tyrosine intermediate.

The protein belongs to the type IA topoisomerase family. In terms of assembly, heterodimer of an RgyrA and RgyrB subunit. The topoisomerase domain is shared between the two subunits. Mg(2+) serves as cofactor.

Its subcellular location is the cytoplasm. Its function is as follows. Modifies the topological state of DNA by introducing positive supercoils in an ATP-dependent process; dATP also allows positive supercoiling. Increases the linking number in steps of +1. Only this subunit binds DNA, in isolation it does not hydrolyze ATP. Hydrolyzes ATP only in the presence of DNA. Transiently cleaves a single DNA strand and remains covalently bound to the 5' DNA end probably through a tyrosine residue. It changes linking number in steps of one, and nicks DNA preferentially at 5'-CNNN | 3'-sites with a strong preference for 4 pyrimidine residues. There are about 1000 heterodimers per cell. May be involved in rewinding the DNA strands in the regions of the chromosome that have opened up to allow transcription or replication. Functionally, reverse gyrase activity is reconstituted after incubation at 80 degrees Celsius for 5 minutes, positive supercoiling requires ATP and Mg(2+). In the presence of ATP it binds and nicks substrate but does not make closed product. The sequence is that of Reverse gyrase subunit A from Methanopyrus kandleri (strain AV19 / DSM 6324 / JCM 9639 / NBRC 100938).